Reading from the N-terminus, the 132-residue chain is UPF0357 protein YCL012C (132 aa).

A signal peptide spans 1–25; that stretch reads MWDLFYFKVFFWVVLISLCIFMVHR.

Belongs to the UPF0357 family.

The sequence is that of UPF0357 protein YCL012C (YCL012C) from Saccharomyces bayanus (Yeast).